The sequence spans 420 residues: uncharacterized protein (420 aa).

Belongs to the Rv1128c/1148c/1588c/1702c/1945/3466 family.

This is an uncharacterized protein from Mycobacterium tuberculosis (strain CDC 1551 / Oshkosh).